Here is a 265-residue protein sequence, read N- to C-terminus: MRILVSNDDGIYSPGLWALVKRLKEVGEVIVVAPDREQSATGTQVTLRQPLRVQKTHPLIPGIEAYAVEGSPCDCVILGLAKLITEPVDLVVSGINHGLNLGDDVLISGTVGAALQGYLRNIPSIAISIPVTMEEPENLDSAACITAEVARRIQNGDITKNSFLNINIPDLPLSQIEELRVTPLAHKTHIETVEEGHDGRKRYFWLRRRQLSSADNKKTDIWAIENGYITISALHERLFQQPVFTLKDAETAGILAAARSCQDKI.

D8, D9, S39, and N96 together coordinate a divalent metal cation.

This sequence belongs to the SurE nucleotidase family. The cofactor is a divalent metal cation.

It localises to the cytoplasm. It catalyses the reaction a ribonucleoside 5'-phosphate + H2O = a ribonucleoside + phosphate. In terms of biological role, nucleotidase that shows phosphatase activity on nucleoside 5'-monophosphates. The protein is 5'-nucleotidase SurE of Dehalococcoides mccartyi (strain CBDB1).